The sequence spans 288 residues: Transmembrane protein 163 (288 aa).

Residues 1–64 are disordered; it reads MEPALGSERR…ESGQFSDGLE (64 aa). The Cytoplasmic portion of the chain corresponds to 1-87; sequence MEPALGSERR…HEAQNYRKKA (87 aa). Residue Ser-11 is modified to Phosphoserine. Pro residues predominate over residues 12-24; the sequence is PPGPGVPRPPPRG. Over residues 25–42 the composition is skewed to low complexity; that stretch reads HAPSTAAPAPSPAPMSSS. Positions 41–71 are required for interaction with MCOLN1; the sequence is SSVQSDEERQPRISESGQFSDGLEDRGLLES. A phosphoserine mark is found at Ser-45, Ser-54, Ser-56, and Ser-60. A helical membrane pass occupies residues 88–108; the sequence is LWVSWLSIIVTLALAVAAFTV. Topologically, residues 109–115 are extracellular; that stretch reads SVMRYSA. A helical transmembrane segment spans residues 116-136; it reads SAFGFAFDAILDVLSSAIVLW. Over 137–149 the chain is Cytoplasmic; that stretch reads RYSNAAAVHSANR. Residues 150 to 170 form a helical membrane-spanning segment; that stretch reads EYIACVILGVIFLLSSICIVV. Residues 171 to 186 are Extracellular-facing; sequence KAIHDLSTRLLPEVDD. Residues 187–207 traverse the membrane as a helical segment; the sequence is FLFSVSILSGILCSVLAVLKF. The Cytoplasmic segment spans residues 208-216; sequence MLGKVLTSR. Residues 217–237 traverse the membrane as a helical segment; sequence ALITDGFNSLVGGVMGFSILL. The Extracellular portion of the chain corresponds to 238–254; it reads SAEVFKHNAAVWYLDGS. The chain crosses the membrane as a helical span at residues 255 to 275; that stretch reads IGVLIGLTIFAYGVKLLIDMV. The Cytoplasmic portion of the chain corresponds to 276-288; it reads PRVRQTRHYEMFE.

It belongs to the TMEM163 family. As to quaternary structure, homodimer. Interacts with MCOLN1. Interacts with SLC30A1, SLC30A2, SLC30A3 and SLC30A4. In terms of tissue distribution, widely expressed, with high expression in the brain, cerebellum, heart, lung and spleen. In the brain, mainly expressed in the glutaminergic neuron subpopulations.

Its subcellular location is the cytoplasmic vesicle. The protein localises to the secretory vesicle. The protein resides in the synaptic vesicle membrane. It localises to the early endosome membrane. It is found in the late endosome membrane. Its subcellular location is the lysosome membrane. The protein localises to the cell membrane. It carries out the reaction Zn(2+)(in) = Zn(2+)(out). Functionally, zinc ion transporter that mediates zinc efflux and plays a crucial role in intracellular zinc homeostasis. Binds the divalent cations Zn(2+), Ni(2+), and to a minor extent Cu(2+). Is a functional modulator of P2X purinoceptors, including P2RX1, P2RX3, P2RX4 and P2RX7. Plays a role in central nervous system development and is required for myelination, and survival and proliferation of oligodendrocytes. This Mus musculus (Mouse) protein is Transmembrane protein 163 (Tmem163).